The chain runs to 369 residues: Choline-phosphate cytidylyltransferase B (369 aa).

The tract at residues 1-27 (MPVVTTDAESETGIPKSLSNEPPSETM) is disordered. CTP contacts are provided by Ile-84, Phe-85, His-92, and Lys-122. Lys-122 and Trp-151 together coordinate phosphocholine. Residues His-168, Asp-169, Tyr-173, Gln-195, Arg-196, Thr-197, and Ile-200 each coordinate CTP. The segment at 309 to 369 (RMLQALSPKQ…SMSEGDEDEK (61 aa)) is disordered. Phosphoserine occurs at positions 315, 319, 322, 323, 329, 331, and 335. The span at 319–339 (SPVSSPTRSRSPSRSPSPTFS) shows a compositional bias: low complexity. Position 345 is a phosphothreonine (Thr-345). A phosphoserine mark is found at Ser-346, Ser-349, Ser-350, Ser-355, Ser-360, and Ser-362. Residues 351-362 (PKAASASISSMS) show a composition bias toward low complexity.

It belongs to the cytidylyltransferase family. In terms of assembly, homodimer. In terms of processing, phosphorylated. Extensively phosphorylated. Highly expressed in testis, placenta, brain, ovary, liver and fetal lung. In terms of tissue distribution, expressed in brain, liver and fetal lung.

Its subcellular location is the cytoplasm. The protein resides in the endoplasmic reticulum. The enzyme catalyses phosphocholine + CTP + H(+) = CDP-choline + diphosphate. Its pathway is phospholipid metabolism; phosphatidylcholine biosynthesis; phosphatidylcholine from phosphocholine: step 1/2. In terms of biological role, catalyzes the key rate-limiting step in the CDP-choline pathway for phosphatidylcholine biosynthesis. This Homo sapiens (Human) protein is Choline-phosphate cytidylyltransferase B (PCYT1B).